A 969-amino-acid polypeptide reads, in one-letter code: Surface protein P113 (969 aa).

The signal sequence occupies residues 1–22 (MKIPFFILHILLLQFLLCLIRC). N-linked (GlcNAc...) asparagine glycosylation is present at N207. The disordered stretch occupies residues 223–328 (IGDESTDSSS…TDTLVNNKEN (106 aa)). Polar residues predominate over residues 229–241 (DSSSMEIQDSTSN). A glycan (N-linked (GlcNAc...) asparagine) is linked at N268. Positions 300–311 (KNEDNKDLEHGS) are enriched in basic and acidic residues. Low complexity predominate over residues 312 to 325 (SNDVNNNTDTLVNN). N317, N360, N661, and N697 each carry an N-linked (GlcNAc...) asparagine glycan. A compositionally biased stretch (polar residues) spans 688–705 (SSNFNIFDSNNTDQNNEQ). The segment at 688 to 947 (SSNFNIFDSN…NETNKTDNGS (260 aa)) is disordered. Low complexity predominate over residues 713-727 (QLLNNNNDDVLSESN). A compositionally biased stretch (basic and acidic residues) spans 728 to 749 (NENKEKTSDDATHKETQEKSDQ). N779 carries an N-linked (GlcNAc...) asparagine glycan. The span at 798–811 (EGTEELQQNDEDAE) shows a compositional bias: acidic residues. Positions 812 to 822 (SLTKENSKSEE) are enriched in basic and acidic residues. The segment covering 823 to 841 (QENEDSTDAEAIDKEEVET) has biased composition (acidic residues). A compositionally biased stretch (basic and acidic residues) spans 842–854 (EEKGKDEQKKDEQ). The segment covering 855–864 (KEQDEEEDGE) has biased composition (acidic residues). The N-linked (GlcNAc...) asparagine glycan is linked to N876. Basic and acidic residues predominate over residues 883–896 (EENKNEVKGEEHLQ). Residues 897 to 907 (GSEQSIEASES) show a composition bias toward low complexity. The span at 908-917 (SQKDETKETE) shows a compositional bias: basic and acidic residues. Residues 918 to 936 (DKEEYVNANDDESSEEDTT) show a composition bias toward acidic residues. Polar residues predominate over residues 937–947 (PNETNKTDNGS). N-linked (GlcNAc...) asparagine glycosylation is found at N938, N941, and N945. N945 carries GPI-anchor amidated asparagine lipidation. A propeptide spans 946-969 (GSSFFFAMSNALLVILLLLFIEFL) (removed in mature form).

In terms of assembly, forms a complex composed of RH5, P113 and human BSG/basigin; the complex bridges the merozoite and host erythrocyte membranes. Within the complex, interacts with RH5 (via N-terminus); the interaction tethers RH5 to the merozoite membrane.

The protein resides in the cell membrane. Its function is as follows. Membrane receptor which tethers secreted RH5 to the merozoite membrane during merozoite invasion of host erythocytes. This is Surface protein P113 from Plasmodium falciparum (isolate 3D7).